The primary structure comprises 139 residues: Putative pre-16S rRNA nuclease (139 aa).

It belongs to the YqgF nuclease family.

Its subcellular location is the cytoplasm. In terms of biological role, could be a nuclease involved in processing of the 5'-end of pre-16S rRNA. The chain is Putative pre-16S rRNA nuclease from Streptococcus uberis (strain ATCC BAA-854 / 0140J).